Reading from the N-terminus, the 131-residue chain is Small ribosomal subunit protein uS8 (131 aa).

Belongs to the universal ribosomal protein uS8 family. Part of the 30S ribosomal subunit. Contacts proteins S5 and S12.

Functionally, one of the primary rRNA binding proteins, it binds directly to 16S rRNA central domain where it helps coordinate assembly of the platform of the 30S subunit. The chain is Small ribosomal subunit protein uS8 from Ralstonia nicotianae (strain ATCC BAA-1114 / GMI1000) (Ralstonia solanacearum).